We begin with the raw amino-acid sequence, 441 residues long: Peroxisomal biogenesis factor 3 (441 aa).

At 1–17 (MAPNQRSRSLLQRHRGK) the chain is on the peroxisomal side. A helical membrane pass occupies residues 18-39 (VLISLTGIAALFTTGSVVVFFV). Residues 40–441 (KRWLYKQQLR…GVSSSFSFKP (402 aa)) lie on the Cytoplasmic side of the membrane.

The protein belongs to the peroxin-3 family. As to quaternary structure, interacts with MSP1; leading to inhibit the translocase activity of MSP1.

Its subcellular location is the peroxisome membrane. Involved in peroxisome biosynthesis. Acts as a regulator of MSP1 by inhibiting the ability of MSP1 to unfold target proteins. This is Peroxisomal biogenesis factor 3 (PEX3) from Saccharomyces cerevisiae (strain ATCC 204508 / S288c) (Baker's yeast).